The chain runs to 459 residues: Cysteine--tRNA ligase (459 aa).

Cys-27 contacts Zn(2+). The short motif at 29–39 is the 'HIGH' region element; that stretch reads ITVYDDCHIGH. Zn(2+) contacts are provided by Cys-208, His-233, and Glu-237. A 'KMSKS' region motif is present at residues 265-269; sequence KMSKS. Lys-268 provides a ligand contact to ATP.

Belongs to the class-I aminoacyl-tRNA synthetase family. Monomer. Zn(2+) serves as cofactor.

The protein resides in the cytoplasm. It catalyses the reaction tRNA(Cys) + L-cysteine + ATP = L-cysteinyl-tRNA(Cys) + AMP + diphosphate. This chain is Cysteine--tRNA ligase, found in Francisella philomiragia subsp. philomiragia (strain ATCC 25017 / CCUG 19701 / FSC 153 / O#319-036).